Consider the following 589-residue polypeptide: uncharacterized protein (589 aa).

Disordered regions lie at residues 328 to 365 (LSSTSDASAAPAGVAGGGKARQMQFSQGGSGQGAEDGP), 379 to 459 (SLLG…DPSN), 525 to 555 (RSTSRLDAGEGQGDDDDEEDGQAEKYEGAVK), and 569 to 589 (VRGTKVVVQPSPPGDDSSRDM). The span at 398–425 (VSLSSASTSARPTQRRSSLTPCSQTPQE) shows a compositional bias: polar residues. A compositionally biased stretch (basic and acidic residues) spans 426–445 (THQHAREALTTRMESQREAN). Positions 536 to 545 (QGDDDDEEDG) are enriched in acidic residues.

This is an uncharacterized protein from Mycosarcoma maydis (Corn smut fungus).